The sequence spans 444 residues: Phosphoglucosamine mutase (444 aa).

Ser-100 acts as the Phosphoserine intermediate in catalysis. Mg(2+) is bound by residues Ser-100, Asp-240, Asp-242, and Asp-244. Ser-100 carries the phosphoserine modification.

The protein belongs to the phosphohexose mutase family. Mg(2+) serves as cofactor. Post-translationally, activated by phosphorylation.

The catalysed reaction is alpha-D-glucosamine 1-phosphate = D-glucosamine 6-phosphate. Its function is as follows. Catalyzes the conversion of glucosamine-6-phosphate to glucosamine-1-phosphate. The protein is Phosphoglucosamine mutase of Moorella thermoacetica (strain ATCC 39073 / JCM 9320).